A 78-amino-acid chain; its full sequence is Magnetosome protein MamL (78 aa).

A signal peptide spans 1–22 (MVRVIGSLVFGGLILLLASSNA). The Lumenal portion of the chain corresponds to 23–38 (HMVETRFGPLIMLAPH). Residues 39-59 (FVVLGITFFLGFAIGIVLVFA) form a helical membrane-spanning segment. At 60-78 (NVMKRRKHKLPGKNIVIKR) the chain is on the cytoplasmic side.

The protein belongs to the magnetosome MamL family.

The protein resides in the magnetosome membrane. In terms of biological role, involved in magnetite crystal maturation, but not in magnetosome vesicle tubulation or formation. One of 7 genes (mamLQBIEMO) able to induce magnetosome membrane biogenesis; coexpression of mamLQRBIEMO in a deletion of the 17 gene mamAB operon restores magnetosome vesicle formation but not magnetite biosynthesis. In Magnetospirillum gryphiswaldense (strain DSM 6361 / JCM 21280 / NBRC 15271 / MSR-1), this protein is Magnetosome protein MamL.